A 597-amino-acid chain; its full sequence is Elongation factor 4 (597 aa).

The 178-residue stretch at 4 to 181 (SKIRNFSIIA…EIVDKISYPI (178 aa)) folds into the tr-type G domain. Residues 16-21 (DHGKST) and 128-131 (NKID) contribute to the GTP site.

It belongs to the TRAFAC class translation factor GTPase superfamily. Classic translation factor GTPase family. LepA subfamily.

It localises to the cell membrane. The catalysed reaction is GTP + H2O = GDP + phosphate + H(+). Its function is as follows. Required for accurate and efficient protein synthesis under certain stress conditions. May act as a fidelity factor of the translation reaction, by catalyzing a one-codon backward translocation of tRNAs on improperly translocated ribosomes. Back-translocation proceeds from a post-translocation (POST) complex to a pre-translocation (PRE) complex, thus giving elongation factor G a second chance to translocate the tRNAs correctly. Binds to ribosomes in a GTP-dependent manner. The chain is Elongation factor 4 from Mycoplasmopsis pulmonis (strain UAB CTIP) (Mycoplasma pulmonis).